The following is a 515-amino-acid chain: Maturase K (515 aa).

This sequence belongs to the intron maturase 2 family. MatK subfamily.

It is found in the plastid. The protein resides in the chloroplast. Its function is as follows. Usually encoded in the trnK tRNA gene intron. Probably assists in splicing its own and other chloroplast group II introns. The polypeptide is Maturase K (Picea mariana (Black spruce)).